Consider the following 198-residue polypeptide: Na(+)-translocating NADH-quinone reductase subunit E (198 aa).

Helical transmembrane passes span 11 to 31, 40 to 60, 77 to 97, 110 to 130, 140 to 160, and 176 to 196; these read SIFI…FLAV, GLGI…NLVF, FLGF…LEMF, GIFL…SFMV, VVYG…MAAI, and LGIT…FSGI.

This sequence belongs to the NqrDE/RnfAE family. Composed of six subunits; NqrA, NqrB, NqrC, NqrD, NqrE and NqrF.

It is found in the cell inner membrane. The catalysed reaction is a ubiquinone + n Na(+)(in) + NADH + H(+) = a ubiquinol + n Na(+)(out) + NAD(+). Its function is as follows. NQR complex catalyzes the reduction of ubiquinone-1 to ubiquinol by two successive reactions, coupled with the transport of Na(+) ions from the cytoplasm to the periplasm. NqrA to NqrE are probably involved in the second step, the conversion of ubisemiquinone to ubiquinol. This is Na(+)-translocating NADH-quinone reductase subunit E from Tolumonas auensis (strain DSM 9187 / NBRC 110442 / TA 4).